A 147-amino-acid polypeptide reads, in one-letter code: MKVIFLQDVKGQGKTGDVKDVADAYANNVLFKKKLARPATTGNLKQHEAHERKAAEEAKQALQDAQALKEKIEKETIIVSTKTGEGGRVFGSVTSKQIADELKQMGYKIDKRKIELEHPIKTLGVTKVPLKLHNEVTATLNVQVKEA.

The tract at residues 40 to 60 is disordered; that stretch reads TTGNLKQHEAHERKAAEEAKQ. Residues 45–59 show a composition bias toward basic and acidic residues; it reads KQHEAHERKAAEEAK.

The protein belongs to the bacterial ribosomal protein bL9 family.

In terms of biological role, binds to the 23S rRNA. This is Large ribosomal subunit protein bL9 from Exiguobacterium sibiricum (strain DSM 17290 / CCUG 55495 / CIP 109462 / JCM 13490 / 255-15).